The following is a 749-amino-acid chain: Transcription factor RFX3 (749 aa).

A DNA-binding region (RFX-type winged-helix) is located at residues 183-258 (HLQWLLDNYE…YHYYGIRVKP (76 aa)). The disordered stretch occupies residues 663–699 (VSPGNLDKDEGSEVESEMDEELDDSSEPQAKREKTEL). Residues 674–688 (SEVESEMDEELDDSS) show a composition bias toward acidic residues.

It belongs to the RFX family. Heterodimer; heterodimerizes with RFX1 and RFX2, and RFX6.

It localises to the nucleus. Transcription factor required for ciliogenesis and islet cell differentiation during endocrine pancreas development. Essential for the differentiation of nodal monocilia and left-right asymmetry specification during embryogenesis. Required for the biogenesis of motile cilia by governing growth and beating efficiency of motile cells. Also required for ciliated ependymal cell differentiation. Regulates the expression of genes involved in ciliary assembly (DYNC2LI1, FOXJ1 and BBS4) and genes involved in ciliary motility (DNAH11, DNAH9 and DNAH5). Together with RFX6, participates in the differentiation of 4 of the 5 islet cell types during endocrine pancreas development, with the exception of pancreatic PP (polypeptide-producing) cells. Regulates transcription by forming a heterodimer with another RFX protein and binding to the X-box in the promoter of target genes. Represses transcription of MAP1A in non-neuronal cells but not in neuronal cells. The chain is Transcription factor RFX3 (RFX3) from Macaca fascicularis (Crab-eating macaque).